A 96-amino-acid chain; its full sequence is Large ribosomal subunit protein bL28 (96 aa).

This sequence belongs to the bacterial ribosomal protein bL28 family.

The sequence is that of Large ribosomal subunit protein bL28 from Methylocella silvestris (strain DSM 15510 / CIP 108128 / LMG 27833 / NCIMB 13906 / BL2).